The primary structure comprises 1409 residues: Inositol hexakisphosphate and diphosphoinositol-pentakisphosphate kinase 1 (1409 aa).

Residue 64 to 65 (KK) coordinates substrate. Residues arginine 145, lysine 198, histidine 205, arginine 224, 248–251 (EEFM), and 257–259 (DVK) each bind ATP. Residue 224 to 225 (RK) participates in substrate binding. 2 residues coordinate substrate: lysine 259 and arginine 273. Residues serine 275, aspartate 320, and 332–334 (DVN) each bind ATP. 337–340 (SFVK) contributes to the substrate binding site. The polyphosphoinositide-binding domain stretch occupies residues 382-453 (PTTSGTMMEL…VLDITRLLLA (72 aa)). The segment at 891-996 (GVEEEGSAPA…PTEMKQSGLG (106 aa)) is disordered. Residues serine 920 and serine 963 each carry the phosphoserine modification. The span at 981–996 (FSSSRPPTEMKQSGLG) shows a compositional bias: polar residues. Phosphoserine is present on residues serine 1013 and serine 1049. A compositionally biased stretch (polar residues) spans 1110–1119 (MHSSQASDNP). The tract at residues 1110 to 1183 (MHSSQASDNP…PSLNSHVAEE (74 aa)) is disordered. Residues serine 1121 and serine 1128 each carry the phosphoserine modification. The span at 1144–1162 (SSGPSSTVSSAGPSSPTTV) shows a compositional bias: low complexity. Residues 1163-1178 (DGNSQFGFSDQPSLNS) are compositionally biased toward polar residues.

This sequence belongs to the histidine acid phosphatase family. VIP1 subfamily.

It localises to the cytoplasm. It is found in the cytosol. The protein localises to the cell membrane. The enzyme catalyses 1D-myo-inositol hexakisphosphate + ATP = 1-diphospho-1D-myo-inositol 2,3,4,5,6-pentakisphosphate + ADP. It catalyses the reaction 5-diphospho-1D-myo-inositol 1,2,3,4,6-pentakisphosphate + ATP + H(+) = 1,5-bis(diphospho)-1D-myo-inositol 2,3,4,6-tetrakisphosphate + ADP. Functionally, bifunctional inositol kinase that acts in concert with the IP6K kinases IP6K1, IP6K2 and IP6K3 to synthesize the diphosphate group-containing inositol pyrophosphates diphosphoinositol pentakisphosphate, PP-InsP5, and bis-diphosphoinositol tetrakisphosphate, (PP)2-InsP4. PP-InsP5 and (PP)2-InsP4, also respectively called InsP7 and InsP8, regulate a variety of cellular processes, including apoptosis, vesicle trafficking, cytoskeletal dynamics, exocytosis, insulin signaling and neutrophil activation. Phosphorylates inositol hexakisphosphate (InsP6) at position 1 to produce PP-InsP5 which is in turn phosphorylated by IP6Ks to produce (PP)2-InsP4. Alternatively, phosphorylates PP-InsP5 at position 1, produced by IP6Ks from InsP6, to produce (PP)2-InsP4. Activated when cells are exposed to hyperosmotic stress. The polypeptide is Inositol hexakisphosphate and diphosphoinositol-pentakisphosphate kinase 1 (Pongo abelii (Sumatran orangutan)).